We begin with the raw amino-acid sequence, 93 residues long: Probable endoribonuclease MazF1 (93 aa).

This sequence belongs to the PemK/MazF family. Forms a complex with cognate antitoxin MazE1.

Toxic component of a type II toxin-antitoxin (TA) system, its cognate antitoxin is MazE1. Probably an endoribonuclease. The sequence is that of Probable endoribonuclease MazF1 (mazF1) from Mycobacterium tuberculosis (strain ATCC 25618 / H37Rv).